The primary structure comprises 207 residues: Small ribosomal subunit protein uS4 (207 aa).

Residues 31 to 55 (KCKLDSKPGQHGRTSGARTSDYGTQ) form a disordered region. Polar residues predominate over residues 42-53 (GRTSGARTSDYG). Residues 97 to 160 (SRLDNVVYRM…KKQARIIEAL (64 aa)) form the S4 RNA-binding domain.

It belongs to the universal ribosomal protein uS4 family. Part of the 30S ribosomal subunit. Contacts protein S5. The interaction surface between S4 and S5 is involved in control of translational fidelity.

Functionally, one of the primary rRNA binding proteins, it binds directly to 16S rRNA where it nucleates assembly of the body of the 30S subunit. Its function is as follows. With S5 and S12 plays an important role in translational accuracy. The polypeptide is Small ribosomal subunit protein uS4 (Burkholderia vietnamiensis (strain G4 / LMG 22486) (Burkholderia cepacia (strain R1808))).